A 191-amino-acid polypeptide reads, in one-letter code: Small ribosomal subunit protein eS7y (191 aa).

N-acetylmethionine is present on Met-1. Residues 17–50 (TEFEEQVTQALFDLENTNQELKSELKDLYINQAV) adopt a coiled-coil conformation.

Belongs to the eukaryotic ribosomal protein eS7 family.

This chain is Small ribosomal subunit protein eS7y (RPS7B), found in Arabidopsis thaliana (Mouse-ear cress).